A 388-amino-acid polypeptide reads, in one-letter code: S-adenosylmethionine synthase (388 aa).

An ATP-binding site is contributed by His-16. Position 18 (Asp-18) interacts with Mg(2+). Glu-44 contributes to the K(+) binding site. Glu-57 and Gln-100 together coordinate L-methionine. Residues 100 to 110 are flexible loop; the sequence is QSPDIAQGVDK. Residues 167 to 169, 233 to 234, Asp-242, 248 to 249, Ala-265, and Lys-269 contribute to the ATP site; these read DAK, RF, and RK. Position 242 (Asp-242) interacts with L-methionine. Lys-273 serves as a coordination point for L-methionine.

Belongs to the AdoMet synthase family. Homotetramer; dimer of dimers. Mg(2+) serves as cofactor. The cofactor is K(+).

It localises to the cytoplasm. It carries out the reaction L-methionine + ATP + H2O = S-adenosyl-L-methionine + phosphate + diphosphate. It participates in amino-acid biosynthesis; S-adenosyl-L-methionine biosynthesis; S-adenosyl-L-methionine from L-methionine: step 1/1. Functionally, catalyzes the formation of S-adenosylmethionine (AdoMet) from methionine and ATP. The overall synthetic reaction is composed of two sequential steps, AdoMet formation and the subsequent tripolyphosphate hydrolysis which occurs prior to release of AdoMet from the enzyme. The chain is S-adenosylmethionine synthase from Polynucleobacter necessarius subsp. necessarius (strain STIR1).